Consider the following 154-residue polypeptide: Myoglobin (154 aa).

The region spanning Gly-2–Lys-148 is the Globin domain. At Ser-4 the chain carries Phosphoserine. A nitrite-binding site is contributed by His-65. His-65 contacts O2. Thr-68 bears the Phosphothreonine mark. His-94 contacts heme b.

The protein belongs to the globin family. In terms of assembly, monomeric.

It localises to the cytoplasm. The protein localises to the sarcoplasm. The enzyme catalyses Fe(III)-heme b-[protein] + nitric oxide + H2O = Fe(II)-heme b-[protein] + nitrite + 2 H(+). It carries out the reaction H2O2 + AH2 = A + 2 H2O. Functionally, monomeric heme protein which primary function is to store oxygen and facilitate its diffusion within muscle tissues. Reversibly binds oxygen through a pentacoordinated heme iron and enables its timely and efficient release as needed during periods of heightened demand. Depending on the oxidative conditions of tissues and cells, and in addition to its ability to bind oxygen, it also has a nitrite reductase activity whereby it regulates the production of bioactive nitric oxide. Under stress conditions, like hypoxia and anoxia, it also protects cells against reactive oxygen species thanks to its pseudoperoxidase activity. The sequence is that of Myoglobin (MB) from Indopacetus pacificus (Longman's beaked whale).